A 114-amino-acid polypeptide reads, in one-letter code: Protein S100-A9 (114 aa).

Blocked amino end (Thr) is present on T2. C3 is subject to S-nitrosocysteine; transient. 2 consecutive EF-hand domains span residues 12–47 (IETIINTFHQYSVKLGHPDTLNQGEFKELVRKDLQN) and 54–89 (KNEKVIEHIMEDLDTNADKQLSFEEFIMLMARLTWA). H20 is a Zn(2+) binding site. S23, L26, and H28 together coordinate Ca(2+). D30 is a Zn(2+) binding site. The Ca(2+) site is built by T31, E36, D67, N69, D71, Q73, and E78. H91 and H95 together coordinate Zn(2+). The span at 93 to 102 (KMHEGDEGPG) shows a compositional bias: basic and acidic residues. The tract at residues 93 to 114 (KMHEGDEGPGHHHKPGLGEGTP) is disordered. The residue at position 105 (H105) is a Pros-methylhistidine. Phosphothreonine; by MAPK14 is present on T113.

In terms of assembly, homodimer. Preferentially exists as a heterodimer or heterotetramer with S100A8 known as calprotectin (S100A8/A9). S100A9 interacts with ATP2A2. S100A9 interacts with AGER, and with the heterodimeric complex formed by TLR4 and LY96 in the presence of calcium and/or zinc ions. S100A9 binds quinoline-3-carboxamides in the presence of calcium and/or zinc ions. S100A9 interacts with amyloid-beta protein 40. Calprotectin (S100A8/9) interacts with CEACAM3 and tubulin filaments in a calcium-dependent manner. Heterotetrameric calprotectin (S100A8/A9) interacts with ANXA6 and associates with tubulin filaments in activated monocytes. Calprotectin (S100A8/9) interacts with NCF2/P67PHOX, RAC1, RAC2, CYBA and CYBB. Calprotectin (S100A8/9) interacts with NOS2 to form the iNOS-S100A8/A9 transnitrosylase complex; induced by LDL(ox). Calprotectin (S100A8/9) interacts with CD69. Phosphorylated. Phosphorylation inhibits activation of tubulin polymerization. In terms of processing, S-nitrosylation of Cys-3 is implicated in LDL(ox)-induced S-nitrosylation of GAPDH at 'Cys-247' through a transnitrosylase mechanism involving a iNOS-S100A8/9 complex. Post-translationally, methylation at His-105 by METTL9 reduces zinc-binding without affecting heterodimerization with S100A8. In terms of tissue distribution, calprotectin (S100A8/9) is predominantly expressed in myeloid cells. Except for inflammatory conditions, the expression is restricted to a specific stage of myeloid differentiation since both proteins are expressed in circulating neutrophils and monocytes but are absent in normal tissue macrophages and lymphocytes. Under chronic inflammatory conditions, such as psoriasis and malignant disorders, also expressed in the epidermis. Found in high concentrations at local sites of inflammation or in the serum of patients with inflammatory diseases such as rheumatoid, cystic fibrosis, inflammatory bowel disease, Crohn's disease, giant cell arteritis, cystic fibrosis, Sjogren's syndrome, systemic lupus erythematosus, and progressive systemic sclerosis. Involved in the formation and deposition of amyloids in the aging prostate known as corpora amylacea inclusions. Strongly up-regulated in many tumors, including gastric, esophageal, colon, pancreatic, bladder, ovarian, thyroid, breast and skin cancers.

Its subcellular location is the secreted. It localises to the cytoplasm. The protein localises to the cytoskeleton. It is found in the cell membrane. In terms of biological role, S100A9 is a calcium- and zinc-binding protein which plays a prominent role in the regulation of inflammatory processes and immune response. It can induce neutrophil chemotaxis, adhesion, can increase the bactericidal activity of neutrophils by promoting phagocytosis via activation of SYK, PI3K/AKT, and ERK1/2 and can induce degranulation of neutrophils by a MAPK-dependent mechanism. Predominantly found as calprotectin (S100A8/A9) which has a wide plethora of intra- and extracellular functions. The intracellular functions include: facilitating leukocyte arachidonic acid trafficking and metabolism, modulation of the tubulin-dependent cytoskeleton during migration of phagocytes and activation of the neutrophilic NADPH-oxidase. Also participates in regulatory T-cell differentiation together with CD69. Activates NADPH-oxidase by facilitating the enzyme complex assembly at the cell membrane, transferring arachidonic acid, an essential cofactor, to the enzyme complex and S100A8 contributes to the enzyme assembly by directly binding to NCF2/P67PHOX. The extracellular functions involve pro-inflammatory, antimicrobial, oxidant-scavenging and apoptosis-inducing activities. Its pro-inflammatory activity includes recruitment of leukocytes, promotion of cytokine and chemokine production, and regulation of leukocyte adhesion and migration. Acts as an alarmin or a danger associated molecular pattern (DAMP) molecule and stimulates innate immune cells via binding to pattern recognition receptors such as Toll-like receptor 4 (TLR4) and receptor for advanced glycation endproducts (AGER). Binding to TLR4 and AGER activates the MAP-kinase and NF-kappa-B signaling pathways resulting in the amplification of the pro-inflammatory cascade. Has antimicrobial activity towards bacteria and fungi and exerts its antimicrobial activity probably via chelation of Zn(2+) which is essential for microbial growth. Can induce cell death via autophagy and apoptosis and this occurs through the cross-talk of mitochondria and lysosomes via reactive oxygen species (ROS) and the process involves BNIP3. Can regulate neutrophil number and apoptosis by an anti-apoptotic effect; regulates cell survival via ITGAM/ITGB and TLR4 and a signaling mechanism involving MEK-ERK. Its role as an oxidant scavenger has a protective role in preventing exaggerated tissue damage by scavenging oxidants. Can act as a potent amplifier of inflammation in autoimmunity as well as in cancer development and tumor spread. Has transnitrosylase activity; in oxidatively-modified low-densitity lipoprotein (LDL(ox))-induced S-nitrosylation of GAPDH on 'Cys-247' proposed to transfer the NO moiety from NOS2/iNOS to GAPDH via its own S-nitrosylated Cys-3. The iNOS-S100A8/A9 transnitrosylase complex is proposed to also direct selective inflammatory stimulus-dependent S-nitrosylation of multiple targets such as ANXA5, EZR, MSN and VIM by recognizing a [IL]-x-C-x-x-[DE] motif. In Homo sapiens (Human), this protein is Protein S100-A9.